The sequence spans 948 residues: MAPPPDTSGSCSAFHECERIFAQWGYPFQDYSESFRQSLDTVCRCSRFFLGVVKRDAHVIPLLASLFEGQTPERNPSADLQQRVAEVADRNGLMRVLRQWRNREMAIIAWQDICGLLDIDSVLTRISETAESAIRTALDWLFDDACRRWGVPRRKDGSAQSLVVLGMGKLGGYELNFSSDIDLVFAYVEDGELPGRNGATYAEFYTRLAQSLVHVLDAVTEDGFVFRVDVRLRPFGESGPLVVSFDSCERYYQAQARDWERYAMVKVRAVGGDAKDGREFERFFHPFVYRRYLDYRVFGELRSLKARIMAELRRKDRGDNIKLGAGGIREIEFIGQAFQLIRGGRNVELQDRRILVVLERLGRLRLLEHGTASFLCAAYRFLRKVENRLQQYEDKQTHELPVSEERRGLLAFSMGFESWEGFLHRLDEVRRRVHEIFTEVIAEPPQPARGEPLLDGGEAELSQALAGFDGAAEAMTGALVKFRASAPVRRLGAGARAELQRVIGKLLAELAAFRVSDPVGVLGRILELFESIAGRGVYFSLLAENPSALSQLVRLAAASPWIVRLIAGAPILLDELLDPRTLYSPLTRESLGREADILFSSLAPDDDEQLMLRLRQFKAAHQLRIAAADIMNVIPVMVVSDYLTDLAEVVIERVLRLAWKFAAARHGIPPVEAETSVDFPGFGIIAYGKLGGIELGYGSDLDLVFLYDGVASDAVTDGPRPISAAEFYARVVQRMVSLLTADMPGGALYEVDLRLRPSGSSGLLVSKADAYENYQLHQAWTWERQALVRARFVAGDPKVGARFDAIRRNVLCRERDSRQVRLDVRSMREKMREHLADRRPGVFDLKQGVGGIADIEFIVQFGVLISAAKHCEITRWTDTVRLLDSLRAINFLELGQADRLRCAYCDYRGRVHRLALQEMPALAASSEFPGHRTAVEAVWKQIIEAPVF.

Positions 1-445 (MAPPPDTSGS…IFTEVIAEPP (445 aa)) are adenylyl removase. The tract at residues 451–948 (EPLLDGGEAE…WKQIIEAPVF (498 aa)) is adenylyl transferase.

Belongs to the GlnE family. It depends on Mg(2+) as a cofactor.

The catalysed reaction is [glutamine synthetase]-O(4)-(5'-adenylyl)-L-tyrosine + phosphate = [glutamine synthetase]-L-tyrosine + ADP. It carries out the reaction [glutamine synthetase]-L-tyrosine + ATP = [glutamine synthetase]-O(4)-(5'-adenylyl)-L-tyrosine + diphosphate. Involved in the regulation of glutamine synthetase GlnA, a key enzyme in the process to assimilate ammonia. When cellular nitrogen levels are high, the C-terminal adenylyl transferase (AT) inactivates GlnA by covalent transfer of an adenylyl group from ATP to specific tyrosine residue of GlnA, thus reducing its activity. Conversely, when nitrogen levels are low, the N-terminal adenylyl removase (AR) activates GlnA by removing the adenylyl group by phosphorolysis, increasing its activity. The regulatory region of GlnE binds the signal transduction protein PII (GlnB) which indicates the nitrogen status of the cell. This Methylococcus capsulatus (strain ATCC 33009 / NCIMB 11132 / Bath) protein is Bifunctional glutamine synthetase adenylyltransferase/adenylyl-removing enzyme.